The primary structure comprises 106 residues: Urease subunit beta (106 aa).

It belongs to the urease beta subunit family. Heterotrimer of UreA (gamma), UreB (beta) and UreC (alpha) subunits. Three heterotrimers associate to form the active enzyme.

It is found in the cytoplasm. The enzyme catalyses urea + 2 H2O + H(+) = hydrogencarbonate + 2 NH4(+). It participates in nitrogen metabolism; urea degradation; CO(2) and NH(3) from urea (urease route): step 1/1. The sequence is that of Urease subunit beta from Synechococcus sp. (strain CC9311).